The chain runs to 511 residues: Bifunctional purine biosynthesis protein PurH (511 aa).

The region spanning 1–145 (MKKRALVSVS…KNHKFVSVIV (145 aa)) is the MGS-like domain.

This sequence belongs to the PurH family.

The catalysed reaction is (6R)-10-formyltetrahydrofolate + 5-amino-1-(5-phospho-beta-D-ribosyl)imidazole-4-carboxamide = 5-formamido-1-(5-phospho-D-ribosyl)imidazole-4-carboxamide + (6S)-5,6,7,8-tetrahydrofolate. It catalyses the reaction IMP + H2O = 5-formamido-1-(5-phospho-D-ribosyl)imidazole-4-carboxamide. The protein operates within purine metabolism; IMP biosynthesis via de novo pathway; 5-formamido-1-(5-phospho-D-ribosyl)imidazole-4-carboxamide from 5-amino-1-(5-phospho-D-ribosyl)imidazole-4-carboxamide (10-formyl THF route): step 1/1. It participates in purine metabolism; IMP biosynthesis via de novo pathway; IMP from 5-formamido-1-(5-phospho-D-ribosyl)imidazole-4-carboxamide: step 1/1. This chain is Bifunctional purine biosynthesis protein PurH, found in Bacillus anthracis (strain A0248).